Reading from the N-terminus, the 198-residue chain is Peptidyl-tRNA hydrolase (198 aa).

Position 15 (tyrosine 15) interacts with tRNA. The active-site Proton acceptor is histidine 20. Residues phenylalanine 66, asparagine 68, and asparagine 114 each coordinate tRNA.

It belongs to the PTH family. Monomer.

It localises to the cytoplasm. It catalyses the reaction an N-acyl-L-alpha-aminoacyl-tRNA + H2O = an N-acyl-L-amino acid + a tRNA + H(+). Hydrolyzes ribosome-free peptidyl-tRNAs (with 1 or more amino acids incorporated), which drop off the ribosome during protein synthesis, or as a result of ribosome stalling. Functionally, catalyzes the release of premature peptidyl moieties from peptidyl-tRNA molecules trapped in stalled 50S ribosomal subunits, and thus maintains levels of free tRNAs and 50S ribosomes. In Cupriavidus taiwanensis (strain DSM 17343 / BCRC 17206 / CCUG 44338 / CIP 107171 / LMG 19424 / R1) (Ralstonia taiwanensis (strain LMG 19424)), this protein is Peptidyl-tRNA hydrolase.